Reading from the N-terminus, the 399-residue chain is Acetylornithine aminotransferase (399 aa).

Residues 97–98 (GA) and F130 each bind pyridoxal 5'-phosphate. R133 is a binding site for N(2)-acetyl-L-ornithine. 215-218 (DEVQ) is a binding site for pyridoxal 5'-phosphate. K244 is subject to N6-(pyridoxal phosphate)lysine. T272 serves as a coordination point for N(2)-acetyl-L-ornithine. A pyridoxal 5'-phosphate-binding site is contributed by T273.

It belongs to the class-III pyridoxal-phosphate-dependent aminotransferase family. ArgD subfamily. As to quaternary structure, homodimer. Requires pyridoxal 5'-phosphate as cofactor.

Its subcellular location is the cytoplasm. It catalyses the reaction N(2)-acetyl-L-ornithine + 2-oxoglutarate = N-acetyl-L-glutamate 5-semialdehyde + L-glutamate. Its pathway is amino-acid biosynthesis; L-arginine biosynthesis; N(2)-acetyl-L-ornithine from L-glutamate: step 4/4. In Mesorhizobium japonicum (strain LMG 29417 / CECT 9101 / MAFF 303099) (Mesorhizobium loti (strain MAFF 303099)), this protein is Acetylornithine aminotransferase.